We begin with the raw amino-acid sequence, 228 residues long: Orotidine 5'-phosphate decarboxylase (228 aa).

Substrate-binding positions include Asp11, Lys33, 60–69, Thr117, Arg178, Gln186, Gly206, and Arg207; that span reads DLKLHDIPNT. The active-site Proton donor is the Lys62.

Belongs to the OMP decarboxylase family. Type 1 subfamily. In terms of assembly, homodimer.

The enzyme catalyses orotidine 5'-phosphate + H(+) = UMP + CO2. It participates in pyrimidine metabolism; UMP biosynthesis via de novo pathway; UMP from orotate: step 2/2. Its function is as follows. Catalyzes the decarboxylation of orotidine 5'-monophosphate (OMP) to uridine 5'-monophosphate (UMP). This Ehrlichia canis (strain Jake) protein is Orotidine 5'-phosphate decarboxylase.